The sequence spans 113 residues: Cytochrome c (113 aa).

Residues Cys21, Cys24, His25, and Met90 each contribute to the heme c site.

It belongs to the cytochrome c family. Binds 1 heme c group covalently per subunit.

It localises to the mitochondrion intermembrane space. Functionally, electron carrier protein. The oxidized form of the cytochrome c heme group can accept an electron from the heme group of the cytochrome c1 subunit of cytochrome reductase. Cytochrome c then transfers this electron to the cytochrome oxidase complex, the final protein carrier in the mitochondrial electron-transport chain. This chain is Cytochrome c (cytC), found in Dictyostelium discoideum (Social amoeba).